The chain runs to 337 residues: Putative high mobility group B protein 11 (337 aa).

Residues 34–125 (VRNPELFWEM…MLFEFEHLYY (92 aa)) enclose the ARID domain. Disordered stretches follow at residues 197–221 (TKRG…QRTG) and 298–337 (AGTS…EVSQ). Residues 215–282 (PKRQRTGYNF…RYKMEILQYR (68 aa)) constitute a DNA-binding region (HMG box). Low complexity predominate over residues 319–329 (TDACTSASSAA).

Belongs to the HMGB family.

The protein resides in the nucleus. In terms of biological role, binds preferentially DNA with A/T-rich content. The protein is Putative high mobility group B protein 11 (HMGB11) of Arabidopsis thaliana (Mouse-ear cress).